The sequence spans 119 residues: Protein phosphatase EYA4 (119 aa).

This sequence belongs to the HAD-like hydrolase superfamily. EYA family. Mg(2+) serves as cofactor.

The protein localises to the cytoplasm. The protein resides in the nucleus. It carries out the reaction O-phospho-L-tyrosyl-[protein] + H2O = L-tyrosyl-[protein] + phosphate. Its function is as follows. Tyrosine phosphatase that specifically dephosphorylates 'Tyr-142' of histone H2AX (H2AXY142ph). 'Tyr-142' phosphorylation of histone H2AX plays a central role in DNA repair and acts as a mark that distinguishes between apoptotic and repair responses to genotoxic stress. Promotes efficient DNA repair by dephosphorylating H2AX, promoting the recruitment of DNA repair complexes containing MDC1. Its function as histone phosphatase probably explains its role in transcription regulation during organogenesis. May be involved in development of the eye. This chain is Protein phosphatase EYA4 (eya4), found in Takifugu rubripes (Japanese pufferfish).